Here is a 134-residue protein sequence, read N- to C-terminus: Large ribosomal subunit protein uL16c (134 aa).

It belongs to the universal ribosomal protein uL16 family. As to quaternary structure, part of the 50S ribosomal subunit.

The protein resides in the plastid. It is found in the chloroplast. The sequence is that of Large ribosomal subunit protein uL16c from Pinus thunbergii (Japanese black pine).